Consider the following 438-residue polypeptide: Dol-P-Man:Man(5)GlcNAc(2)-PP-Dol alpha-1,3-mannosyltransferase (438 aa).

The residue at position 13 (S13) is a Phosphoserine. 11 helical membrane-spanning segments follow: residues 41–61 (YTLL…FWVI), 95–115 (TGPL…YYAT), 123–143 (MAQN…FLIY), 149–169 (VPPF…SIFV), 172–192 (LFND…LLAQ), 203–223 (LAVS…FLLL), 231–251 (ALPK…PFLL), 289–309 (FHLA…LCRW), 332–352 (PLTP…GICF), 356–376 (LHYQ…WAMP), and 407–427 (AALH…PQPF).

This sequence belongs to the glycosyltransferase ALG3 family.

Its subcellular location is the endoplasmic reticulum membrane. It catalyses the reaction an alpha-D-Man-(1-&gt;2)-alpha-D-Man-(1-&gt;2)-alpha-D-Man-(1-&gt;3)-[alpha-D-Man-(1-&gt;6)]-beta-D-Man-(1-&gt;4)-beta-D-GlcNAc-(1-&gt;4)-alpha-D-GlcNAc-diphospho-di-trans,poly-cis-dolichol + a di-trans,poly-cis-dolichyl beta-D-mannosyl phosphate = an alpha-D-Man-(1-&gt;2)-alpha-D-Man-(1-&gt;2)-alpha-D-Man-(1-&gt;3)-[alpha-D-Man-(1-&gt;3)-alpha-D-Man-(1-&gt;6)]-beta-D-Man-(1-&gt;4)-beta-D-GlcNAc-(1-&gt;4)-alpha-D-GlcNAc-diphospho-di-trans,poly-cis-dolichol + a di-trans,poly-cis-dolichyl phosphate + H(+). It participates in protein modification; protein glycosylation. In terms of biological role, dol-P-Man:Man(5)GlcNAc(2)-PP-Dol alpha-1,3-mannosyltransferase that operates in the biosynthetic pathway of dolichol-linked oligosaccharides, the glycan precursors employed in protein asparagine (N)-glycosylation. The assembly of dolichol-linked oligosaccharides begins on the cytosolic side of the endoplasmic reticulum membrane and finishes in its lumen. The sequential addition of sugars to dolichol pyrophosphate produces dolichol-linked oligosaccharides containing fourteen sugars, including two GlcNAcs, nine mannoses and three glucoses. Once assembled, the oligosaccharide is transferred from the lipid to nascent proteins by oligosaccharyltransferases. In the lumen of the endoplasmic reticulum, adds the first dolichyl beta-D-mannosyl phosphate derived mannose in an alpha-1,3 linkage to Man(5)GlcNAc(2)-PP-dolichol to produce Man(6)GlcNAc(2)-PP-dolichol. Man(6)GlcNAc(2)-PP-dolichol is a substrate for ALG9, the following enzyme in the biosynthetic pathway. This chain is Dol-P-Man:Man(5)GlcNAc(2)-PP-Dol alpha-1,3-mannosyltransferase, found in Homo sapiens (Human).